A 738-amino-acid polypeptide reads, in one-letter code: Squalene hopane cyclase afumA (738 aa).

PFTB repeat units lie at residues 132-173 (GSQY…RIIG) and 321-361 (RRRC…KLHD). The Proton donor role is filled by aspartate 460. 3 PFTB repeats span residues 482-523 (VRDA…ESLC), 581-621 (CARA…QYFK), and 634-675 (AARA…SQTA).

It belongs to the terpene cyclase/mutase family.

It functions in the pathway secondary metabolite biosynthesis. Squalene hopane cyclase; part of the gene cluster that mediates the biosynthesis fumihopaside A, a hopane-type glucoside that enhances the thermotolerance and UV resistance of N.fumigata. The first step of fumihopaside A biosynthesis is performed by the squalene hopane cyclase afumA that catalyzes the cyclization of 3S-oxidosqualene into the hopene 21-beta-H-hopane-3-beta,22-diol. The cytochrome P450 monooxygenase afumB is responsible for both hydroxylation at C-24 and oxidations at C-30 of the afumA product. The glycosyltransferase afumC then catalyzes the glycosylation at C-24, using UDP-D-glucose as a donor, to produce fumihopaside A. AfumC is also able to accept UDP-D-galactose and UDP-D-glucuronic acid as donors to yield minor derivatives. Fumihopaside B, another minor derivative produced, is different from fumihopaside A due to the presence of a double bond between C-22 and C-29. This Aspergillus fumigatus (strain CBS 144.89 / FGSC A1163 / CEA10) (Neosartorya fumigata) protein is Squalene hopane cyclase afumA.